Consider the following 273-residue polypeptide: Aegyptin (273 aa).

Residues 1-19 (MKPLVKLFLLFCLVGIVLS) form the signal peptide. Residues 20-160 (RPMPEDEEPV…SEKNDPADTY (141 aa)) form a disordered region. Positions 24-62 (EDEEPVAEGGDDDASGESEGEEETTDDAGGDGGEEENEG) are enriched in acidic residues. Positions 63–86 (EEHAGDKDAGGEDTGKEENTGHDD) are enriched in basic and acidic residues. Residues 87-145 (AGEEDAGEEDAGEEDAGEEDAGEEDAEKEEGEKEDAGDDAGSDDGEEDSTGGDEGEDNA) are compositionally biased toward acidic residues. The segment at 137 to 273 (GGDEGEDNAE…IKSCVSSKGR (137 aa)) is mediates binding of host collagen. The segment covering 146–158 (EDSKGSEKNDPAD) has biased composition (basic and acidic residues). Cystine bridges form between Cys213–Cys267 and Cys235–Cys245.

The protein belongs to the aegyptin family. In terms of assembly, monomer; exhibits non-globular elongated shape in solution. As to expression, female saliva (at protein level). Adult female salivary gland (at protein level).

The protein resides in the secreted. Modulates blood feeding of female mosquitoes on vertebrate hosts. Inhibits collagen-induced platelet aggregation in the host via preventing collagen interaction with its three major ligands: glycoprotein VI, integrin alpha-2/beta-1 (ITGA2/ITGB1) and von Willebrand factor (VWF). Prevents collagen-mediated thrombus formation in the host. Binds to host collagens but not to laminin, vitronectin (VTN), fibronectin (FN1), von Willebrand factor (VWF) and fibrinogen. Influences cytokine production and populations of circulating leukocytes. Functionally, (Microbial infection) Reduces replication of dengue virus type 2 at inoculation site and viremia levels on day 2 post-inoculation. Promotes production of pro-inflammatory cytokines, such as GM-CSF (CSF2), IFN-gamma (IFNG), IL5 and IL6, in the lymph nodes of mice infected with dengue virus type 2. Increases the number of circulating eosinophils in mice infected with dengue virus type 2. Decreases the number of circulating monocytes in mice infected with dengue virus type 2. This is Aegyptin from Aedes aegypti (Yellowfever mosquito).